Consider the following 318-residue polypeptide: uncharacterized protein (318 aa).

It belongs to the NAD(P)-dependent epimerase/dehydratase family.

This is an uncharacterized protein from Staphylococcus haemolyticus (strain JCSC1435).